The sequence spans 242 residues: 2-C-methyl-D-erythritol 4-phosphate cytidylyltransferase (242 aa).

The protein belongs to the IspD/TarI cytidylyltransferase family. IspD subfamily.

The enzyme catalyses 2-C-methyl-D-erythritol 4-phosphate + CTP + H(+) = 4-CDP-2-C-methyl-D-erythritol + diphosphate. Its pathway is isoprenoid biosynthesis; isopentenyl diphosphate biosynthesis via DXP pathway; isopentenyl diphosphate from 1-deoxy-D-xylulose 5-phosphate: step 2/6. In terms of biological role, catalyzes the formation of 4-diphosphocytidyl-2-C-methyl-D-erythritol from CTP and 2-C-methyl-D-erythritol 4-phosphate (MEP). The protein is 2-C-methyl-D-erythritol 4-phosphate cytidylyltransferase of Shewanella loihica (strain ATCC BAA-1088 / PV-4).